The sequence spans 132 residues: Large-conductance mechanosensitive channel (132 aa).

Transmembrane regions (helical) follow at residues 8 to 28, 30 to 50, and 67 to 87; these read FALK…GAFG, IVSS…LGGV, and GAFI…FLFI.

The protein belongs to the MscL family. Homopentamer.

Its subcellular location is the cell membrane. Channel that opens in response to stretch forces in the membrane lipid bilayer. May participate in the regulation of osmotic pressure changes within the cell. In Bacillus cytotoxicus (strain DSM 22905 / CIP 110041 / 391-98 / NVH 391-98), this protein is Large-conductance mechanosensitive channel.